Consider the following 128-residue polypeptide: Ig kappa chain V-V region T1 (128 aa).

The first 20 residues, 1 to 20 (MRTPAQFLGILLLWFPGIKC), serve as a signal peptide directing secretion. A framework-1 region spans residues 21–43 (DIKMTQSPSSMYASLGERVTISC). C43 and C108 are oxidised to a cystine. Residues 44-54 (KASQDINSYLT) are complementarity-determining-1. A framework-2 region spans residues 55–69 (WFQQKPGKSPKTLLY). The complementarity-determining-2 stretch occupies residues 70–76 (RANRLVD). The framework-3 stretch occupies residues 77–108 (GVPSRFSGSGSGQDFSLTISSLEYEDMGIYYC). A complementarity-determining-3 region spans residues 109 to 117 (LQYDEFPLT). The tract at residues 118-127 (FGAGTKLELK) is framework-4.

In Mus musculus (Mouse), this protein is Ig kappa chain V-V region T1.